A 396-amino-acid polypeptide reads, in one-letter code: 1-deoxy-D-xylulose 5-phosphate reductoisomerase (396 aa).

T10, G11, S12, I13, G36, K37, N38, and N124 together coordinate NADPH. K125 contributes to the 1-deoxy-D-xylulose 5-phosphate binding site. E126 is a binding site for NADPH. Residue D150 participates in Mn(2+) binding. Residues S151, E152, S186, and H209 each contribute to the 1-deoxy-D-xylulose 5-phosphate site. A Mn(2+)-binding site is contributed by E152. Residue G215 coordinates NADPH. 1-deoxy-D-xylulose 5-phosphate is bound by residues S222, N227, K228, and E231. E231 contacts Mn(2+).

It belongs to the DXR family. The cofactor is Mg(2+). Requires Mn(2+) as cofactor.

It carries out the reaction 2-C-methyl-D-erythritol 4-phosphate + NADP(+) = 1-deoxy-D-xylulose 5-phosphate + NADPH + H(+). It functions in the pathway isoprenoid biosynthesis; isopentenyl diphosphate biosynthesis via DXP pathway; isopentenyl diphosphate from 1-deoxy-D-xylulose 5-phosphate: step 1/6. In terms of biological role, catalyzes the NADPH-dependent rearrangement and reduction of 1-deoxy-D-xylulose-5-phosphate (DXP) to 2-C-methyl-D-erythritol 4-phosphate (MEP). This is 1-deoxy-D-xylulose 5-phosphate reductoisomerase from Haemophilus ducreyi (strain 35000HP / ATCC 700724).